The sequence spans 471 residues: Serine/threonine-protein kinase sid1 (471 aa).

The Protein kinase domain occupies 9 to 260 (YTLLRKLGSG…AKELLQHPFI (252 aa)). Residues 15–23 (LGSGSFGVV) and Lys38 each bind ATP. The active-site Proton acceptor is Asp129.

Belongs to the protein kinase superfamily. STE Ser/Thr protein kinase family. STE20 subfamily. Interacts with cdc14.

The protein localises to the cytoplasm. It is found in the cytoskeleton. Its subcellular location is the microtubule organizing center. It localises to the spindle pole body. The enzyme catalyses L-seryl-[protein] + ATP = O-phospho-L-seryl-[protein] + ADP + H(+). It carries out the reaction L-threonyl-[protein] + ATP = O-phospho-L-threonyl-[protein] + ADP + H(+). Its function is as follows. Has a role in the septation initiation network (SIN) required for cytokinesis. This is Serine/threonine-protein kinase sid1 (sid1) from Schizosaccharomyces pombe (strain 972 / ATCC 24843) (Fission yeast).